The following is a 166-amino-acid chain: MANNDQKRDEGYIEKLVQVNRVAKTVKGGRIFTFTALTVVGDGKGRVGFGRGKSREVPAAIQKAMEAARRNMIQVDLKGTTLQYATKAAHGASKVYMQPASEGTGIIAGGAMRAVLEVAGVQNVLAKCYGSTNPVNVVYATFKGLKAMQSPESIAAKRGKSVEEIF.

The S5 DRBM domain maps to 12-75; sequence YIEKLVQVNR…EAARRNMIQV (64 aa).

It belongs to the universal ribosomal protein uS5 family. Part of the 30S ribosomal subunit. Contacts proteins S4 and S8.

In terms of biological role, with S4 and S12 plays an important role in translational accuracy. Located at the back of the 30S subunit body where it stabilizes the conformation of the head with respect to the body. The polypeptide is Small ribosomal subunit protein uS5 (Pseudomonas putida (strain ATCC 700007 / DSM 6899 / JCM 31910 / BCRC 17059 / LMG 24140 / F1)).